The sequence spans 142 residues: Large ribosomal subunit protein uL23 (142 aa).

The protein belongs to the universal ribosomal protein uL23 family.

The chain is Large ribosomal subunit protein uL23 (RPL25) from Kluyveromyces lactis (strain ATCC 8585 / CBS 2359 / DSM 70799 / NBRC 1267 / NRRL Y-1140 / WM37) (Yeast).